A 938-amino-acid polypeptide reads, in one-letter code: Glutamate receptor ionotropic, NMDA 1 (938 aa).

Positions 1–18 (MSTMHLLTFALLFSCSFA) are cleaved as a signal peptide. Residues 19-559 (RAACDPKIVN…TLDSFMQPFQ (541 aa)) lie on the Extracellular side of the membrane. Asn-61, Asn-203, Asn-239, Asn-276, Asn-300, Asn-350, Asn-368, Asn-440, Asn-471, and Asn-491 each carry an N-linked (GlcNAc...) asparagine glycan. Cys-79 and Cys-308 are joined by a disulfide. 2 cysteine pairs are disulfide-bonded: Cys-420-Cys-454 and Cys-436-Cys-455. Positions 516, 518, and 523 each coordinate glycine. A helical transmembrane segment spans residues 560–580 (STLWLLVGLSVHVVAVMLYLL). Residues 581–602 (DRFSPFGRFKVNSEEEEEDALT) are Cytoplasmic-facing. The segment at residues 603–624 (LSSAMWFSWGVLLNSGIGEGAP) is an intramembrane region (discontinuously helical). Positions 603 to 624 (LSSAMWFSWGVLLNSGIGEGAP) are pore-forming. At 625–630 (RSFSAR) the chain is on the cytoplasmic side. The chain crosses the membrane as a helical span at residues 631–647 (ILGMVWAGFAMIIVASY). Over 648 to 812 (TANLAAFLVL…NAPATLTFEN (165 aa)) the chain is Extracellular. The N-linked (GlcNAc...) asparagine glycan is linked to Asn-674. Residues Ser-688 and Asp-732 each contribute to the glycine site. A disulfide bridge links Cys-744 with Cys-798. N-linked (GlcNAc...) asparagine glycosylation occurs at Asn-771. Residues 813–833 (MAGVFMLVAGGIVAGIFLIFI) form a helical membrane-spanning segment. Residues 834-938 (EIAYKRHKDA…LQLCSRHRES (105 aa)) are Cytoplasmic-facing. Ser-889 is modified (phosphoserine; by PKC). The segment at 889–938 (SSFKRRRSSKDTSTGGGRGALQNQKDTVLPRRAIEREEGQLQLCSRHRES) is disordered. Ser-890 carries the phosphoserine modification. Phosphoserine; by PKC occurs at positions 896 and 897. Residues 916–927 (VLPRRAIEREEG) are compositionally biased toward basic and acidic residues.

Belongs to the glutamate-gated ion channel (TC 1.A.10.1) family. NR1/GRIN1 subfamily. As to quaternary structure, heterotetramer; the NMDAR subunits are modular and harbor tiered domains that function in concert to regulate opening and closing of the cation-selective ion channel pore. Forms heterotetrameric channels composed of two GluN1/zeta subunits (GRIN1), and two identical GluN2/epsilon subunits (GRIN2A, GRIN2B, GRIN2C or GRIN2D) or GluN3 subunits (GRIN3A or GRIN3B) (in vitro). Can also form heterotetrameric channels that contain at least two GluN1 subunits and at least two different GluN2 subunits (or a combination of one GluN2 and one GluN3 subunits) (in vitro). In vivo, the subunit composition may vary in function of the expression levels of the different subunits. Found in a complex with GRIN2A or GRIN2B, GRIN3A and PPP2CB. Found in a complex with GRIN2A or GRIN2B and GRIN3B. Interacts with SNX27 (via PDZ domain); the interaction is required for recycling to the plasma membrane when endocytosed and prevent degradation in lysosomes. Interacts with DLG4 and MPDZ. Interacts with LRFN1 and LRFN2. Interacts with MYZAP. Found in a complex with DLG4 and PRR7. Found in a complex with GRIN2B and PRR7. Interacts with PRR7; the interaction is reduced following NMDA receptor activity. Post-translationally, NMDA is probably regulated by C-terminal phosphorylation of an isoform of GRIN1 by PKC. Dephosphorylated on Ser-897 probably by protein phosphatase 2A (PPP2CB). Its phosphorylated state is influenced by the formation of the NMDAR-PPP2CB complex and the NMDAR channel activity. Detected in brain (at protein level). Detected in brain.

Its subcellular location is the cell membrane. The protein localises to the postsynaptic cell membrane. It is found in the postsynaptic density membrane. The protein resides in the synaptic cell membrane. It carries out the reaction Ca(2+)(in) = Ca(2+)(out). The catalysed reaction is Na(+)(in) = Na(+)(out). It catalyses the reaction K(+)(in) = K(+)(out). In terms of biological role, component of N-methyl-D-aspartate (NMDA) receptors (NMDARs) that function as heterotetrameric, ligand-gated cation channels with high calcium permeability and voltage-dependent block by Mg(2+). NMDARs participate in synaptic plasticity for learning and memory formation by contributing to the long-term potentiation (LTP). Channel activation requires binding of the neurotransmitter L-glutamate to the GluN2 subunit, glycine or D-serine binding to the GluN1 subunit, plus membrane depolarization to eliminate channel inhibition by Mg(2+). NMDARs mediate simultaneously the potasium efflux and the influx of calcium and sodium. Each GluN2 or GluN3 subunit confers differential attributes to channel properties, including activation, deactivation and desensitization kinetics, pH sensitivity, Ca2(+) permeability, and binding to allosteric modulators. The chain is Glutamate receptor ionotropic, NMDA 1 from Mus musculus (Mouse).